Reading from the N-terminus, the 303-residue chain is ATP synthase gamma chain (303 aa).

The protein belongs to the ATPase gamma chain family. F-type ATPases have 2 components, CF(1) - the catalytic core - and CF(0) - the membrane proton channel. CF(1) has five subunits: alpha(3), beta(3), gamma(1), delta(1), epsilon(1). CF(0) has three main subunits: a, b and c.

It localises to the cell inner membrane. Functionally, produces ATP from ADP in the presence of a proton gradient across the membrane. The gamma chain is believed to be important in regulating ATPase activity and the flow of protons through the CF(0) complex. This chain is ATP synthase gamma chain, found in Bartonella quintana (strain Toulouse) (Rochalimaea quintana).